We begin with the raw amino-acid sequence, 2325 residues long: Protein sidekick homolog (2325 aa).

Residues 1 to 26 (MRNRLLLIFYTTTVLWTIGYTQLVLG) form the signal peptide. Residues 27 to 2019 (KPPIFQDGGS…IPDDPFYTTW (1993 aa)) are Extracellular-facing. 3 consecutive Ig-like C2-type domains span residues 28–105 (PPIF…AAIS), 217–319 (PSLQ…AYMT), and 324–397 (PILK…ADLA). 3 disulfides stabilise this stretch: Cys-52–Cys-94, Cys-247–Cys-301, and Cys-345–Cys-386. Asn-407 carries N-linked (GlcNAc...) asparagine glycosylation. Ig-like C2-type domains follow at residues 456 to 544 (PSQK…VQVN) and 547 to 638 (SLIE…AMLQ). 2 cysteine pairs are disulfide-bonded: Cys-480/Cys-528 and Cys-568/Cys-622. N-linked (GlcNAc...) asparagine glycosylation is found at Asn-632, Asn-655, Asn-807, Asn-868, Asn-932, and Asn-1016. 13 consecutive Fibronectin type-III domains span residues 645-751 (MPER…MPQQ), 756-853 (APRN…TSEG), 858-957 (APKN…TEED), 961-1055 (SVDE…VPPE), 1059-1154 (RPSM…TLQT), 1159-1254 (PSQR…TYES), 1259-1359 (SPRN…TMED), 1363-1457 (PPES…SSVR), 1463-1566 (APAP…TLPS), 1571-1671 (QPIS…VGYS), 1673-1775 (PKRN…DKPG), 1776-1872 (PVGI…SKDG), and 1873-2004 (PPPP…TEQL). The disordered stretch occupies residues 1036–1059 (TRKGDGPVEETKFESGVPPELPGR). Over residues 1037–1048 (RKGDGPVEETKF) the composition is skewed to basic and acidic residues. A glycan (N-linked (GlcNAc...) asparagine) is linked at Asn-1107. The segment at 1137–1161 (KGRGAPSEPSRSFETLQTNPDTPSQ) is disordered. The span at 1145 to 1161 (PSRSFETLQTNPDTPSQ) shows a compositional bias: polar residues. Asn-1614 carries N-linked (GlcNAc...) asparagine glycosylation. Disordered regions lie at residues 1857 to 1884 (GEQR…ITSG) and 1918 to 1947 (PANG…ATST). A glycan (N-linked (GlcNAc...) asparagine) is linked at Asn-1863. The span at 1935-1947 (AKSAAQTAAATST) shows a compositional bias: low complexity. Residues 2020-2040 (WFMALVAMGAFVLIVIIIAIL) form a helical membrane-spanning segment. Over 2041–2325 (CVTGSSAKYR…NLTTGFSSFV (285 aa)) the chain is Cytoplasmic. Disordered regions lie at residues 2080-2113 (NMTR…SVLG), 2164-2187 (TAYV…PTRS), 2202-2226 (RGHI…LQQP), and 2285-2325 (ILTG…SSFV). Residues 2091 to 2100 (PGTTQSWVSD) show a composition bias toward polar residues. Low complexity predominate over residues 2215 to 2226 (GSQPQGSPLQQP). 2 stretches are compositionally biased toward polar residues: residues 2294–2305 (AGRSSTTDSTSE) and 2313–2325 (ATPN…SSFV).

The protein belongs to the sidekick family.

Its subcellular location is the membrane. Functionally, cell adhesion protein. The polypeptide is Protein sidekick homolog (rig-4) (Caenorhabditis elegans).